The chain runs to 112 residues: UPF0060 membrane protein SAV_4756 (112 aa).

4 helical membrane-spanning segments follow: residues 8–28, 33–53, 62–82, and 91–111; these read ALFV…WQGV, GWLW…VATL, ILAA…MVAD, and VTGA…PRGG.

The protein belongs to the UPF0060 family.

Its subcellular location is the cell membrane. The chain is UPF0060 membrane protein SAV_4756 from Streptomyces avermitilis (strain ATCC 31267 / DSM 46492 / JCM 5070 / NBRC 14893 / NCIMB 12804 / NRRL 8165 / MA-4680).